Here is an 833-residue protein sequence, read N- to C-terminus: MAHSACGFSVALLGALLLGTARLLRGTEASEIALPQRSGVTVSIKLGNPALPVKICYIVMSRQHITELIIRPGERKSFTFSCSNPEKHFVLKIEKNIDCMSGPCPFGEVHLQPSTSELPILNRTFIWDVRAHKSIGLELQFATPRLRQIGPGESCADGVTHSISGHIDATEVRIGTFCSNGTVSRIKMQEGVKMALHLPWFHRRNVSGFSIANRSSIKRLCIIESVFEGEGSATLMSANYPGGFPEDELMTWQFVVPAHLRASVSFLNFNVSNCERKEERVEYYIPGSTTNPEVFRLEDKQPGNMAGNFNLSLQGCDQDAQSPGILRLQFQVLVQRPQDESNKTYMVDLSRERTMSLTIEPRPVKHGRRFVPGCFVCLESRTCSTNVTLTAGSIHKISFLCDDLTRLWVNVEKTLSCLDHRYCYRQSFKLQVPDYILQLPVQLHDFSWKLLVPKDKLSLMLVPGQKLQQHTQERPCNTSFGYHVTSTTPGQDLYFGSFCSGGSIEKIQVKQNSSVTLRAYAPSFQQEVSKQGLIVSYTPYFKEEGIFTVTPDTKNKVYLRSPNWDRGLPALSSVSWNISVPSNQVACLTVLKERSGLACQSGRAFMIIQEQQSRAEEIFSLEEEVLPKPSFHHHSFWVNISNCSPMNGKQLDLLFWVTLTPRTVDLAVVIGAAGGGALLLFALVLIICFVKKKKKVDKGPAVGIYNGNVNTQMPQTQKFPKGRKDNDSHVYAVIEDTMVYGHLLQDSGGSFIQPEVDTYRPFQGPMGDCPPTPPPLFSRTPTAKFTAEELAPSSPPESESEPYTFSHPNKGEIGVRETDIPLLHTQGPVETEE.

Positions 1–29 (MAHSACGFSVALLGALLLGTARLLRGTEA) are cleaved as a signal peptide. Residues 30-666 (SEIALPQRSG…VTLTPRTVDL (637 aa)) lie on the Extracellular side of the membrane. Residues Asn-122, Asn-180, Asn-205, Asn-270, Asn-310, Asn-342, and Asn-386 are each glycosylated (N-linked (GlcNAc...) asparagine). The CUB domain maps to 417–540 (CLDHRYCYRQ…QGLIVSYTPY (124 aa)). An intrachain disulfide couples Cys-476 to Cys-499. A helical membrane pass occupies residues 667 to 687 (AVVIGAAGGGALLLFALVLII). At 688–833 (CFVKKKKKVD…HTQGPVETEE (146 aa)) the chain is on the cytoplasmic side. A Phosphotyrosine modification is found at Tyr-731. A disordered region spans residues 783–833 (AKFTAEELAPSSPPESESEPYTFSHPNKGEIGVRETDIPLLHTQGPVETEE). Over residues 809–819 (NKGEIGVRETD) the composition is skewed to basic and acidic residues.

In terms of assembly, interacts with CDH2/N-cadherin, CDH3/P-cadherin, SDC1/syndecan-1, SDC4/syndecan-4 and the serine protease ST14/MT-SP1. Also interacts SRC and PRKCG/protein kinase C gamma. In terms of processing, phosphorylated on tyrosine by kinases of the SRC family such as SRC and YES as well as by the protein kinase C gamma/PRKCG. Dephosphorylated by phosphotyrosine phosphatases. Also phosphorylated by suramin, a heparin analog. Tyrosine phosphorylated in response to dissociation of integrin alpha-6 beta-4 from laminin-5. Post-translationally, N-glycosylated. A soluble form may also be produced by proteolytic cleavage at the cell surface (shedding). Another peptide of 80 kDa (p80) is present in cultured keratinocytes probably due to tryptic cleavage at an unidentified site on the N-terminal side. Converted to p80 by plasmin, a trypsin-like protease.

Its subcellular location is the cell membrane. May be involved in cell adhesion and cell matrix association. May play a role in the regulation of anchorage versus migration or proliferation versus differentiation via its phosphorylation. May be a novel marker for leukemia diagnosis and for immature hematopoietic stem cell subsets. Belongs to the tetraspanin web involved in tumor progression and metastasis. In Mus musculus (Mouse), this protein is CUB domain-containing protein 1 (Cdcp1).